The sequence spans 218 residues: Small ribosomal subunit protein uS3c (218 aa).

The KH type-2 domain occupies 47 to 118 (VQKHMRISSG…RLNIAIARVP (72 aa)).

The protein belongs to the universal ribosomal protein uS3 family. Part of the 30S ribosomal subunit.

The protein resides in the plastid. The protein localises to the chloroplast. The polypeptide is Small ribosomal subunit protein uS3c (rps3) (Nuphar advena (Common spatterdock)).